A 176-amino-acid chain; its full sequence is Inner membrane-spanning protein YciB (176 aa).

A run of 6 helical transmembrane segments spans residues 3–23 (FLFD…WGIF), 24–44 (TATA…AFRH), 49–69 (TMLW…LVLH), 72–92 (KFIQ…LLAA), 121–141 (LAWA…VHNF), and 149–169 (FKLF…SLWL).

It belongs to the YciB family.

The protein localises to the cell inner membrane. Its function is as follows. Plays a role in cell envelope biogenesis, maintenance of cell envelope integrity and membrane homeostasis. In Burkholderia cenocepacia (strain ATCC BAA-245 / DSM 16553 / LMG 16656 / NCTC 13227 / J2315 / CF5610) (Burkholderia cepacia (strain J2315)), this protein is Inner membrane-spanning protein YciB.